Consider the following 510-residue polypeptide: Archaeosine synthase subunit alpha (510 aa).

The 84-residue stretch at 427–510 folds into the PUA domain; that stretch reads LGKFTINKAS…LKKGIAVKVR (84 aa).

This sequence belongs to the archaeosine synthase type 1 family. As to quaternary structure, forms a robust complex with the archaeosine synthase beta subunit RaSEA, likely an alpha(2)beta(2) heterotetrameric structure. Formation of this complex highly increases lysine transfer activity.

It carries out the reaction 7-cyano-7-carbaguanosine(15) in tRNA + L-lysine = 7-N-[(5S)-5-amino-5-carboxypentyl]formamidino-7-deazaguanosine(15) in tRNA. Its pathway is tRNA modification; archaeosine-tRNA biosynthesis. Its function is as follows. Functions in the biosynthesis of archaeosine, a modified nucleoside present in the dihydrouridine loop (D-loop) of archaeal tRNAs. Catalyzes the addition of L-lysine to the cyano group of 7-cyano-7-deazaguanine (preQ0)-modified tRNAs at position 15, to generate q0kN15-tRNA, a q0N lysine adduct identified as 7-N-[(5S)-5-amino-5-carboxypentyl]formamidino-7-deazaguanosine. This is Archaeosine synthase subunit alpha from Thermoplasma acidophilum (strain ATCC 25905 / DSM 1728 / JCM 9062 / NBRC 15155 / AMRC-C165).